The sequence spans 177 residues: CRIB domain-containing protein RIC8 (177 aa).

Residues 17–30 enclose the CRIB domain; that stretch reads IGTPTDVKHVAHIG. A compositionally biased stretch (basic and acidic residues) spans 72 to 89; sequence STRSRDIPRLPKSSRERS. A disordered region spans residues 72-177; sequence STRSRDIPRL…SSTSDAGYLT (106 aa). Residues 158–171 show a composition bias toward low complexity; sequence GSQVESISDSSSTS.

In terms of biological role, functions as a downstream effector of Rho-related GTP binding proteins of the 'Rho of Plants' (ROPs) family. Participates in the propagation of ROP GTPase signals in specific cellular responses. In Arabidopsis thaliana (Mouse-ear cress), this protein is CRIB domain-containing protein RIC8 (RIC8).